Reading from the N-terminus, the 207-residue chain is Ribosome maturation factor RimM (207 aa).

Residues 130-207 (EDEFYWVDLI…RIVVDWGLDY (78 aa)) form the PRC barrel domain.

It belongs to the RimM family. As to quaternary structure, binds ribosomal protein uS19.

The protein localises to the cytoplasm. In terms of biological role, an accessory protein needed during the final step in the assembly of 30S ribosomal subunit, possibly for assembly of the head region. Essential for efficient processing of 16S rRNA. May be needed both before and after RbfA during the maturation of 16S rRNA. It has affinity for free ribosomal 30S subunits but not for 70S ribosomes. The sequence is that of Ribosome maturation factor RimM from Cupriavidus taiwanensis (strain DSM 17343 / BCRC 17206 / CCUG 44338 / CIP 107171 / LMG 19424 / R1) (Ralstonia taiwanensis (strain LMG 19424)).